Reading from the N-terminus, the 132-residue chain is Small ribosomal subunit protein uS8 (132 aa).

The protein belongs to the universal ribosomal protein uS8 family. Part of the 30S ribosomal subunit. Contacts proteins S5 and S12.

One of the primary rRNA binding proteins, it binds directly to 16S rRNA central domain where it helps coordinate assembly of the platform of the 30S subunit. This is Small ribosomal subunit protein uS8 from Rhodococcus jostii (strain RHA1).